A 455-amino-acid chain; its full sequence is Chromosomal replication initiator protein DnaA (455 aa).

The interval Met-1–Arg-75 is domain I, interacts with DnaA modulators. A domain II region spans residues Arg-75–Thr-117. The span at Arg-84 to Ser-93 shows a compositional bias: basic and acidic residues. The tract at residues Arg-84–Thr-107 is disordered. Positions Lys-118–Ser-334 are domain III, AAA+ region. ATP-binding residues include Gly-162, Gly-164, Lys-165, and Thr-166. Residues Arg-335–Ser-455 are domain IV, binds dsDNA.

This sequence belongs to the DnaA family. Oligomerizes as a right-handed, spiral filament on DNA at oriC.

It is found in the cytoplasm. Functionally, plays an essential role in the initiation and regulation of chromosomal replication. ATP-DnaA binds to the origin of replication (oriC) to initiate formation of the DNA replication initiation complex once per cell cycle. Binds the DnaA box (a 9 base pair repeat at the origin) and separates the double-stranded (ds)DNA. Forms a right-handed helical filament on oriC DNA; dsDNA binds to the exterior of the filament while single-stranded (ss)DNA is stabiized in the filament's interior. The ATP-DnaA-oriC complex binds and stabilizes one strand of the AT-rich DNA unwinding element (DUE), permitting loading of DNA polymerase. After initiation quickly degrades to an ADP-DnaA complex that is not apt for DNA replication. Binds acidic phospholipids. This is Chromosomal replication initiator protein DnaA from Lactiplantibacillus plantarum (strain ATCC BAA-793 / NCIMB 8826 / WCFS1) (Lactobacillus plantarum).